The sequence spans 162 residues: Lipoprotein signal peptidase (162 aa).

2 helical membrane passes run 66–86 (PFFI…FRKL) and 92–112 (LAAV…IDRV). Residues Asp-119 and Asp-137 contribute to the active site. Residues 132–152 (AFNVADSAICVGVALLALDMI) traverse the membrane as a helical segment.

This sequence belongs to the peptidase A8 family.

The protein resides in the cell inner membrane. It carries out the reaction Release of signal peptides from bacterial membrane prolipoproteins. Hydrolyzes -Xaa-Yaa-Zaa-|-(S,diacylglyceryl)Cys-, in which Xaa is hydrophobic (preferably Leu), and Yaa (Ala or Ser) and Zaa (Gly or Ala) have small, neutral side chains.. It functions in the pathway protein modification; lipoprotein biosynthesis (signal peptide cleavage). Functionally, this protein specifically catalyzes the removal of signal peptides from prolipoproteins. The chain is Lipoprotein signal peptidase from Geobacter metallireducens (strain ATCC 53774 / DSM 7210 / GS-15).